Reading from the N-terminus, the 78-residue chain is Sec-independent protein translocase protein TatA (78 aa).

The helical transmembrane segment at Met1–Gly21 threads the bilayer. The interval Asp46–Ala78 is disordered. The span at Thr52 to Thr62 shows a compositional bias: basic and acidic residues. Positions Thr63–Ala78 are enriched in low complexity.

It belongs to the TatA/E family. The Tat system comprises two distinct complexes: a TatABC complex, containing multiple copies of TatA, TatB and TatC subunits, and a separate TatA complex, containing only TatA subunits. Substrates initially bind to the TatABC complex, which probably triggers association of the separate TatA complex to form the active translocon.

It localises to the cell inner membrane. Part of the twin-arginine translocation (Tat) system that transports large folded proteins containing a characteristic twin-arginine motif in their signal peptide across membranes. TatA could form the protein-conducting channel of the Tat system. The sequence is that of Sec-independent protein translocase protein TatA from Nitratiruptor sp. (strain SB155-2).